A 200-amino-acid chain; its full sequence is Recombination protein RecR (200 aa).

The C4-type zinc finger occupies 57–72 (CQHCRTFTENSLCDIC). Residues 81–176 (GQLCIVETPA…NITRIAHGVP (96 aa)) form the Toprim domain.

The protein belongs to the RecR family.

Its function is as follows. May play a role in DNA repair. It seems to be involved in an RecBC-independent recombinational process of DNA repair. It may act with RecF and RecO. This chain is Recombination protein RecR, found in Tolumonas auensis (strain DSM 9187 / NBRC 110442 / TA 4).